The following is a 370-amino-acid chain: Dihydroorotate dehydrogenase (quinone) (370 aa).

FMN-binding positions include 67 to 71 (AGFDK) and threonine 91. Residue lysine 71 coordinates substrate. 116–120 (NRMGF) is a binding site for substrate. Residues asparagine 146 and asparagine 179 each contribute to the FMN site. Asparagine 179 lines the substrate pocket. Residue serine 182 is the Nucleophile of the active site. Residue asparagine 184 participates in substrate binding. Residues lysine 222 and threonine 250 each coordinate FMN. Residue 251-252 (NT) coordinates substrate. FMN contacts are provided by residues glycine 276, glycine 305, and 326-327 (YS).

The protein belongs to the dihydroorotate dehydrogenase family. Type 2 subfamily. Monomer. Requires FMN as cofactor.

Its subcellular location is the cell membrane. The enzyme catalyses (S)-dihydroorotate + a quinone = orotate + a quinol. The protein operates within pyrimidine metabolism; UMP biosynthesis via de novo pathway; orotate from (S)-dihydroorotate (quinone route): step 1/1. In terms of biological role, catalyzes the conversion of dihydroorotate to orotate with quinone as electron acceptor. The polypeptide is Dihydroorotate dehydrogenase (quinone) (Streptomyces griseus subsp. griseus (strain JCM 4626 / CBS 651.72 / NBRC 13350 / KCC S-0626 / ISP 5235)).